The following is a 142-amino-acid chain: Hemoglobin subunit alpha-A (142 aa).

Residues 2 to 142 enclose the Globin domain; the sequence is VLSAADKTNV…VGAVLTAKYR (141 aa). H59 is a binding site for O2. Heme b is bound at residue H88.

Belongs to the globin family. In terms of assembly, heterotetramer of two alpha chains and two beta chains. Red blood cells.

In terms of biological role, involved in oxygen transport from the lung to the various peripheral tissues. In Anas platyrhynchos (Mallard), this protein is Hemoglobin subunit alpha-A (HBAA).